The following is a 783-amino-acid chain: Galactinol--sucrose galactosyltransferase (783 aa).

The protein belongs to the glycosyl hydrolases 36 family.

The catalysed reaction is alpha-D-galactosyl-(1-&gt;3)-1D-myo-inositol + sucrose = raffinose + myo-inositol. With respect to regulation, inhibited by Ag(2)+, Hg(2+), Zn(2+), p-chloromercuribenzoate (pCMB) and 1-deoxygalactonojirimycin. Its function is as follows. Transglycosidase operating by a ping-pong reaction mechanism. Involved in the synthesis of raffinose, a major soluble carbohydrate in seeds, roots and tubers. Specific for galactinol and p-nitrophenyl-alpha-D-galactoside as galactosyl donors. Able to utilize sucrose, lactose, 4-beta-galactobiose, N-acetyl-D-lactosamine, trehalose and lacto-N-biose as acceptors. May also act as a glycoside hydrolase. The polypeptide is Galactinol--sucrose galactosyltransferase (RFS) (Oryza sativa subsp. japonica (Rice)).